Here is a 729-residue protein sequence, read N- to C-terminus: Dipeptidyl peptidase 3 (729 aa).

A Zn(2+)-binding site is contributed by His459. Glu460 is a catalytic residue. The Zn(2+) site is built by His464 and Glu517.

It belongs to the peptidase M49 family. Requires Zn(2+) as cofactor.

The protein resides in the cytoplasm. The catalysed reaction is Release of an N-terminal dipeptide from a peptide comprising four or more residues, with broad specificity. Also acts on dipeptidyl 2-naphthylamides.. The chain is Dipeptidyl peptidase 3 (dpp3) from Nematostella vectensis (Starlet sea anemone).